The chain runs to 368 residues: Probable auxin efflux carrier component 5b (368 aa).

Transmembrane regions (helical) follow at residues Val7–Ser27, Cys39–Ala59, Val71–Ala91, Cys114–Leu134, Leu145–Phe165, Val227–Ile247, Val251–Ala271, Leu286–Leu306, Leu312–Ala332, and Ile347–Ile367.

The protein belongs to the auxin efflux carrier (TC 2.A.69.1) family. In terms of tissue distribution, expressed at low levels in roots and shoot apex.

The protein resides in the membrane. Functionally, may act as a component of the auxin efflux carrier. This is Probable auxin efflux carrier component 5b from Oryza sativa subsp. japonica (Rice).